We begin with the raw amino-acid sequence, 532 residues long: MVDNTQITKTISLEDYGIKNATVHYQLSPEELHNKTIKLGQGVESSSGALAVNTGEFTGRSPKDRFIVKDEVTKDKVWWGDINIPFDTKKFDSLYNKVAEYLGDKDVYARDAYACADEKYRLNIRVLNEYPWSNLFAFNMFLRPENQELDNFKEDWLVLNAPGFKANPEVDGTRQENFAILNFSKKIALIGGTGYTGEIKKGIFSALNFVLPVYENTLPMHCSANVGEDGDTAIFFGLSGTGKTTLSADPERKLIGDDEHGWTKENTIFNFEGGCYAKVINLSEENEPDIYKAIKPGAILENVALDANGDVDFEDVTITQNTRVSYPINHINNIQKPSTGENPKNIFFLTADAFGVLPPISKLTPGQAAYHFISGYTAKVAGTEAGVDEPVPSFSACFGAPFMPLHPTEYAEMLSKKMKAADVNVWLVNTGWTGGPYGVGSRMKLKYTREMISSALEGKLENVDYEKHNIFGLEMPKTCEGVPSEVLNPRNTWKDQNAYDLKAKELSNFFRKNFRKFEEYANEEIMNGAPVE.

The substrate site is built by Arg-60, Tyr-195, and Lys-201. ATP is bound by residues Lys-201, His-221, and 237 to 245; that span reads GLSGTGKTT. Lys-201 and His-221 together coordinate Mn(2+). A Mn(2+)-binding site is contributed by Asp-258. Residues Glu-287, Arg-323, and Thr-448 each contribute to the ATP site. Arg-323 contributes to the substrate binding site.

It belongs to the phosphoenolpyruvate carboxykinase (ATP) family. The cofactor is Mn(2+).

It is found in the cytoplasm. It catalyses the reaction oxaloacetate + ATP = phosphoenolpyruvate + ADP + CO2. It functions in the pathway carbohydrate biosynthesis; gluconeogenesis. Functionally, involved in the gluconeogenesis. Catalyzes the conversion of oxaloacetate (OAA) to phosphoenolpyruvate (PEP) through direct phosphoryl transfer between the nucleoside triphosphate and OAA. The protein is Phosphoenolpyruvate carboxykinase (ATP) of Christiangramia forsetii (strain DSM 17595 / CGMCC 1.15422 / KT0803) (Gramella forsetii).